The following is a 508-amino-acid chain: 2,3-bisphosphoglycerate-independent phosphoglycerate mutase (508 aa).

Positions 14 and 64 each coordinate Mn(2+). The active-site Phosphoserine intermediate is the Ser64. Residues His125, Arg155–Asp156, Arg187, Arg193, Arg259–Arg262, and Lys332 each bind substrate. The Mn(2+) site is built by Asp399, His403, Asp440, His441, and His459.

This sequence belongs to the BPG-independent phosphoglycerate mutase family. Monomer. Mn(2+) is required as a cofactor.

It carries out the reaction (2R)-2-phosphoglycerate = (2R)-3-phosphoglycerate. It participates in carbohydrate degradation; glycolysis; pyruvate from D-glyceraldehyde 3-phosphate: step 3/5. Functionally, catalyzes the interconversion of 2-phosphoglycerate and 3-phosphoglycerate. The protein is 2,3-bisphosphoglycerate-independent phosphoglycerate mutase of Pseudomonas fluorescens (strain Pf0-1).